A 406-amino-acid chain; its full sequence is MSRRRISCKDLGHADCQGWLYKKKEKGTFLSNKWKKFWVVLKGSSLYWYGNQLAEKADGFVNLPDFTVERASECKKKNAFKINHPQIKTFYFAAENLQEMNMWLNKLGFAVTHKESTTKDEECYSESEQEDPETAVEAPPPPSASATSSPVAARRASSSSPKRRETSCSFSSLENTVKAPSRFSSSGSKERQSWLDIVNSSPATEDVGHPLSFAVQVHTLASSEASSCRVSENSSTTPESGCLNSLSSDDTSSLNNSQDHLTVPDRASGSRMTDRDEIKSSEDDEMEKLYKSLEQASLSPLGDRRPSTKKELRKSFVKRCKNPSINEKLHKIRTLNSTLKCKEHDLAMINQLLDDPKLTARKYREWKVMNTLLIQDIYQQQVPQDPEVTPQEIMNPTSSDCVENSL.

The region spanning 13 to 112 is the PH domain; it reads HADCQGWLYK…WLNKLGFAVT (100 aa). 3 disordered regions span residues 118-173, 228-285, and 383-406; these read TKDE…FSSL, CRVS…EDDE, and PQDPEVTPQEIMNPTSSDCVENSL. Over residues 123–134 the composition is skewed to acidic residues; that stretch reads CYSESEQEDPET. Over residues 144-160 the composition is skewed to low complexity; sequence ASATSSPVAARRASSSS. Residues 228-239 show a composition bias toward polar residues; sequence CRVSENSSTTPE. Residues 243–259 show a composition bias toward low complexity; the sequence is LNSLSSDDTSSLNNSQD. Positions 272–285 are enriched in basic and acidic residues; sequence MTDRDEIKSSEDDE. Positions 285–406 are necessary for interaction with PSCD2 and to translocate to the plasma membrane; that stretch reads EMEKLYKSLE…TSSDCVENSL (122 aa). Polar residues predominate over residues 392–406; it reads EIMNPTSSDCVENSL.

As to quaternary structure, interacts with guanine-nucleotide exchange factors PSCD1, PSCD2, PSCD3 and PSCD4. In terms of tissue distribution, expressed in brain, spleen, lung, testis and kidney.

It localises to the cytoplasm. Its subcellular location is the cell membrane. Enhances the promotion of guanine-nucleotide exchange by PSCD2 on ARF6 in a concentration-dependent manner. The protein is Interactor protein for cytohesin exchange factors 1 (Ipcef1) of Rattus norvegicus (Rat).